The sequence spans 446 residues: Plant intracellular Ras-group-related LRR protein 3 (446 aa).

Residues 65–100 (EACRAVVRLEETHDAYEALLQEAEGRLEAVYRSAME) are a coiled coil. The interval 101 to 121 (GKDLEEPDGRDESAAAAAGDD) is disordered. 10 LRR repeats span residues 138 to 160 (GKPV…AFGR), 161 to 184 (IQGL…IGGL), 185 to 207 (DHLE…IGLL), 208 to 230 (LNLR…ISKC), 232 to 254 (SLIE…GYEL), 255 to 277 (VNLR…ICEM), 279 to 300 (SLYL…IGKL), 301 to 324 (SSLE…SFGD), 325 to 347 (LLNL…NFGR), and 349 to 371 (DKLE…IVNK). The GVYW signature appears at 372 to 384 (GVDAVKEYMLQRW).

Belongs to the SHOC2 family. In terms of tissue distribution, widely expressed.

Leucine-rich repeat protein that likely mediates protein interactions, possibly in the context of signal transduction. This Oryza sativa subsp. japonica (Rice) protein is Plant intracellular Ras-group-related LRR protein 3 (IRL3).